Reading from the N-terminus, the 378-residue chain is Glycerate kinase (378 aa).

Belongs to the glycerate kinase type-1 family.

The enzyme catalyses (R)-glycerate + ATP = (2R)-3-phosphoglycerate + ADP + H(+). The chain is Glycerate kinase (glxK) from Haemophilus influenzae (strain ATCC 51907 / DSM 11121 / KW20 / Rd).